The primary structure comprises 313 residues: MNATYRHITVLLEEAVSALAPREDGCYLDGTFGRGGHSRALLEKLGAGGRLLGFDKDPQAIQTGKALAAEDGRFVIVQRSFAELGDEVRARGLEGRIDGVLLDLGVSSPQLDDPERGFSFLNDGPLDMRMNPGQGISAAEFIANAAEEEIARVFKEYGEERFAKRMARAIVQRRQERPFERTADLAEVITVANPAWEKGKNPATRAFQGLRIHVNNELGDLERGLDAALESLAVGGRLVVISFHSLEDRIVKLFMRKHAKGEADNLPRDLPIRSKVFEPRLKLLGKPQYASEEELKANPRSRSAVMRVAEKLR.

Residues 35-37 (GGH), Asp-55, Phe-81, Asp-103, and Gln-110 each bind S-adenosyl-L-methionine.

It belongs to the methyltransferase superfamily. RsmH family.

Its subcellular location is the cytoplasm. The enzyme catalyses cytidine(1402) in 16S rRNA + S-adenosyl-L-methionine = N(4)-methylcytidine(1402) in 16S rRNA + S-adenosyl-L-homocysteine + H(+). Functionally, specifically methylates the N4 position of cytidine in position 1402 (C1402) of 16S rRNA. The sequence is that of Ribosomal RNA small subunit methyltransferase H from Pseudomonas aeruginosa (strain LESB58).